A 678-amino-acid polypeptide reads, in one-letter code: Amino-acid acetyltransferase, mitochondrial (678 aa).

The interval 86 to 111 (LKAQHPPKAQTEPTTGHSKGTVTQSL) is disordered. Positions 96-111 (TEPTTGHSKGTVTQSL) are enriched in polar residues. The 170-residue stretch at 499–668 (NRPRLSLDDP…YEQVCRSIQP (170 aa)) folds into the N-acetyltransferase domain.

Belongs to the acetyltransferase family.

It localises to the mitochondrion. The catalysed reaction is L-glutamate + acetyl-CoA = N-acetyl-L-glutamate + CoA + H(+). It functions in the pathway amino-acid biosynthesis; L-arginine biosynthesis; N(2)-acetyl-L-ornithine from L-glutamate: step 1/4. Functionally, N-acetylglutamate synthase involved in arginine biosynthesis. This Aspergillus oryzae (strain ATCC 42149 / RIB 40) (Yellow koji mold) protein is Amino-acid acetyltransferase, mitochondrial (arg2).